The sequence spans 452 residues: Protein phosphatase 1F (452 aa).

The region spanning 153–410 is the PPM-type phosphatase domain; the sequence is LVSIHAIRNT…DNITVMVVFL (258 aa). Asp195, Gly196, Asp357, and Asp401 together coordinate Mn(2+). Position 452 is a phosphoserine (Ser452).

This sequence belongs to the PP2C family. As to quaternary structure, associates with FEM1B. Requires Mg(2+) as cofactor. Mn(2+) serves as cofactor. In terms of tissue distribution, expressed in the liver.

It carries out the reaction O-phospho-L-seryl-[protein] + H2O = L-seryl-[protein] + phosphate. The catalysed reaction is O-phospho-L-threonyl-[protein] + H2O = L-threonyl-[protein] + phosphate. Functionally, dephosphorylates and concomitantly deactivates CaM-kinase II activated upon autophosphorylation, and CaM-kinases IV and I activated upon phosphorylation by CaM-kinase kinase. Promotes apoptosis. The chain is Protein phosphatase 1F (Ppm1f) from Mus musculus (Mouse).